Reading from the N-terminus, the 60-residue chain is Large ribosomal subunit protein bL32 (60 aa).

The interval 1–60 (MAVQQNKKSPSKRGMHRSHNALTVPGIAVEPTTGETHMRHHISPNGFYRGRQVLKNKSEA) is disordered. The segment covering 9 to 19 (SPSKRGMHRSH) has biased composition (basic residues).

The protein belongs to the bacterial ribosomal protein bL32 family.

This Acidovorax ebreus (strain TPSY) (Diaphorobacter sp. (strain TPSY)) protein is Large ribosomal subunit protein bL32.